The chain runs to 145 residues: Large ribosomal subunit protein uL15 (145 aa).

Over residues 1 to 11 (MELHSLKSTPG) the composition is skewed to polar residues. The segment at 1-48 (MELHSLKSTPGSRKEKHRKGRGHAAGKGKQAGKGQSGQRKRSKVRLGF) is disordered. The segment covering 14–26 (KEKHRKGRGHAAG) has biased composition (basic residues).

It belongs to the universal ribosomal protein uL15 family. In terms of assembly, part of the 50S ribosomal subunit.

Binds to the 23S rRNA. This is Large ribosomal subunit protein uL15 from Mycoplasmopsis pulmonis (strain UAB CTIP) (Mycoplasma pulmonis).